The sequence spans 306 residues: MIFQRTVKEMVKTTGVGLHSGNKVTLIIKPAPVNTGIKLVRTDLSPAVEIPAVADQVRETTMCTALVNDDGVRISTIEHLFAALAGLGIDNAVIEVDAPEIPIMDGSASPFVFLLQSVGIQEQNAAKKYIKITKPIRVEDGDKWAELKPFKGFRVDFAIDFNHPEIARSQQHMVMDFSSSAFIKDISRARTFGFMRDIEYLRANNLALGGSMENAVVLDEYRVLNPDGLRYEDEFVKHKILDAFGDLYVAGHAIVGEFCAYKTGHALNNQLVRAMLAQQDAWEIVSFEKEADAPVSFSVPAGAVFA.

3 residues coordinate Zn(2+): His79, His238, and Asp242. The active-site Proton donor is His265.

This sequence belongs to the LpxC family. Zn(2+) serves as cofactor.

It carries out the reaction a UDP-3-O-[(3R)-3-hydroxyacyl]-N-acetyl-alpha-D-glucosamine + H2O = a UDP-3-O-[(3R)-3-hydroxyacyl]-alpha-D-glucosamine + acetate. It participates in glycolipid biosynthesis; lipid IV(A) biosynthesis; lipid IV(A) from (3R)-3-hydroxytetradecanoyl-[acyl-carrier-protein] and UDP-N-acetyl-alpha-D-glucosamine: step 2/6. Catalyzes the hydrolysis of UDP-3-O-myristoyl-N-acetylglucosamine to form UDP-3-O-myristoylglucosamine and acetate, the committed step in lipid A biosynthesis. The sequence is that of UDP-3-O-acyl-N-acetylglucosamine deacetylase from Shewanella pealeana (strain ATCC 700345 / ANG-SQ1).